Here is a 205-residue protein sequence, read N- to C-terminus: Thiamine-phosphate synthase (205 aa).

4-amino-2-methyl-5-(diphosphooxymethyl)pyrimidine is bound by residues 35–39 and Asn-67; that span reads QYRDK. Mg(2+)-binding residues include Asp-68 and Asp-86. Thr-105 is a 4-amino-2-methyl-5-(diphosphooxymethyl)pyrimidine binding site. 132–134 is a 2-[(2R,5Z)-2-carboxy-4-methylthiazol-5(2H)-ylidene]ethyl phosphate binding site; sequence SLT. A 4-amino-2-methyl-5-(diphosphooxymethyl)pyrimidine-binding site is contributed by Lys-135. Gly-162 contributes to the 2-[(2R,5Z)-2-carboxy-4-methylthiazol-5(2H)-ylidene]ethyl phosphate binding site.

It belongs to the thiamine-phosphate synthase family. Mg(2+) is required as a cofactor.

The catalysed reaction is 2-[(2R,5Z)-2-carboxy-4-methylthiazol-5(2H)-ylidene]ethyl phosphate + 4-amino-2-methyl-5-(diphosphooxymethyl)pyrimidine + 2 H(+) = thiamine phosphate + CO2 + diphosphate. It catalyses the reaction 2-(2-carboxy-4-methylthiazol-5-yl)ethyl phosphate + 4-amino-2-methyl-5-(diphosphooxymethyl)pyrimidine + 2 H(+) = thiamine phosphate + CO2 + diphosphate. The enzyme catalyses 4-methyl-5-(2-phosphooxyethyl)-thiazole + 4-amino-2-methyl-5-(diphosphooxymethyl)pyrimidine + H(+) = thiamine phosphate + diphosphate. It participates in cofactor biosynthesis; thiamine diphosphate biosynthesis; thiamine phosphate from 4-amino-2-methyl-5-diphosphomethylpyrimidine and 4-methyl-5-(2-phosphoethyl)-thiazole: step 1/1. Condenses 4-methyl-5-(beta-hydroxyethyl)thiazole monophosphate (THZ-P) and 2-methyl-4-amino-5-hydroxymethyl pyrimidine pyrophosphate (HMP-PP) to form thiamine monophosphate (TMP). In Pseudomonas savastanoi pv. phaseolicola (strain 1448A / Race 6) (Pseudomonas syringae pv. phaseolicola (strain 1448A / Race 6)), this protein is Thiamine-phosphate synthase.